Consider the following 415-residue polypeptide: MSVLETFDPAVAEVIRHETERQEYNLELIASENFVSPAVLEAQGSVLTNKYAEGYPGKRYYGGCHCVDVVENLAIDRAKELFGADHVNVQPHSGSQANMAVYFSVLKPGDTVLGMNLAHGGHLTHGSPVNFSGKLFNIVPYGVSKETQTIDYEETERLALEHKPKMIVVGASAYPRIIDFEAFRRIADKVGAVVMVDMAHIAGLVAAGLHPSPVPYAEFVTTTTHKTLRGPRGGMIMCREEWAKTLNSNIFPGIQGGPLMHVIAAKAVAFKEALTPEFKKYQEQIVKNAKALAEGLTKRGFKLTSGGTDNHLMLVDLSQTELTGKVAEEALDRAGITVNKNGIPFDTRSPFITSGIRIGTPAATSHGLKEAEMEQVAGFIADVLGNVTDEAKLAAVKTQVNALMKRFPMYADRLA.

(6S)-5,6,7,8-tetrahydrofolate contacts are provided by residues Leu-117 and 121–123; that span reads GHL. At Lys-226 the chain carries N6-(pyridoxal phosphate)lysine. 349–351 lines the (6S)-5,6,7,8-tetrahydrofolate pocket; that stretch reads SPF.

Belongs to the SHMT family. Homodimer. Pyridoxal 5'-phosphate serves as cofactor.

The protein resides in the cytoplasm. It carries out the reaction (6R)-5,10-methylene-5,6,7,8-tetrahydrofolate + glycine + H2O = (6S)-5,6,7,8-tetrahydrofolate + L-serine. Its pathway is one-carbon metabolism; tetrahydrofolate interconversion. It functions in the pathway amino-acid biosynthesis; glycine biosynthesis; glycine from L-serine: step 1/1. Its function is as follows. Catalyzes the reversible interconversion of serine and glycine with tetrahydrofolate (THF) serving as the one-carbon carrier. This reaction serves as the major source of one-carbon groups required for the biosynthesis of purines, thymidylate, methionine, and other important biomolecules. Also exhibits THF-independent aldolase activity toward beta-hydroxyamino acids, producing glycine and aldehydes, via a retro-aldol mechanism. The polypeptide is Serine hydroxymethyltransferase (Geobacter sp. (strain M21)).